A 784-amino-acid chain; its full sequence is Cell wall protein Lmo0130 (784 aa).

The N-terminal stretch at 1–34 (MKVNKFFKKTTHVLLVAGLTIGLTAPFTGTTAQA) is a signal peptide. The tract at residues 690–761 (ATTPPDNGNG…NTSLPTTGDT (72 aa)) is disordered. Residues 697 to 729 (GNGGTDNGNGNGNNGGTDGNGGTNNGNGSGTNG) are compositionally biased toward gly residues. The segment covering 730-759 (GTTTTEDPTTTTSNTSTTGTSSNTSLPTTG) has biased composition (low complexity). Residues 755–759 (LPTTG) carry the LPXTG sorting signal motif. At Thr-758 the chain carries Pentaglycyl murein peptidoglycan amidated threonine. Residues 759-784 (GDTAGLATVFGVILTTTALYVLRKRS) constitute a propeptide, removed by sortase A.

It localises to the secreted. The protein localises to the cell wall. In Listeria monocytogenes serovar 1/2a (strain ATCC BAA-679 / EGD-e), this protein is Cell wall protein Lmo0130.